The chain runs to 145 residues: Ornithine decarboxylase antizyme (145 aa).

This sequence belongs to the ODC antizyme family. In terms of assembly, interacts with ODC1 and thereby sterically blocks ODC homodimerization.

Its function is as follows. Ornithine decarboxylase (ODC) antizyme protein that negatively regulates ODC activity and intracellular polyamine biosynthesis and uptake in response to increased intracellular polyamine levels. Binds to ODC monomers, inhibiting the assembly of the functional ODC homodimer, and targets the monomers for ubiquitin-independent proteolytic destruction by the 26S proteasome. This is Ornithine decarboxylase antizyme from Onchocerca volvulus.